The primary structure comprises 421 residues: Testin (421 aa).

The region spanning 92 to 199 (MILTNPVAAK…GDVKLPCEMD (108 aa)) is the PET domain. The interval 133-164 (EKQPVAGSEGAQYRKKQLAKQLPAHDQDPSKC) is disordered. Residues 155–164 (PAHDQDPSKC) are compositionally biased toward basic and acidic residues. 3 LIM zinc-binding domains span residues 234-297 (YSCY…CDSE), 299-359 (PRCA…NHAV), and 362-421 (QGCH…KMMS).

Belongs to the prickle / espinas / testin family. Interacts via LIM domain 1 with ZYX. Interacts (via LIM domain 3) with ENAH and VASP. Interacts with ALKBH4, talin, actin, alpha-actinin, GRIP1 and PXN. Interacts (via LIM domain 2) with ACTL7A (via N-terminus). Heterodimer with ACTL7A; the heterodimer interacts with ENAH to form a heterotrimer.

Its subcellular location is the cytoplasm. It is found in the cell junction. It localises to the focal adhesion. Scaffold protein that may play a role in cell adhesion, cell spreading and in the reorganization of the actin cytoskeleton. Plays a role in the regulation of cell proliferation. May act as a tumor suppressor. The sequence is that of Testin (TES) from Colobus guereza (Mantled guereza).